We begin with the raw amino-acid sequence, 601 residues long: Elongation factor 4 (601 aa).

Positions 7 to 189 (DNIRNFSIVA…AIVKRLPPPK (183 aa)) constitute a tr-type G domain. Residues 19–24 (DHGKST) and 136–139 (NKVD) contribute to the GTP site.

This sequence belongs to the TRAFAC class translation factor GTPase superfamily. Classic translation factor GTPase family. LepA subfamily.

Its subcellular location is the cell inner membrane. The enzyme catalyses GTP + H2O = GDP + phosphate + H(+). In terms of biological role, required for accurate and efficient protein synthesis under certain stress conditions. May act as a fidelity factor of the translation reaction, by catalyzing a one-codon backward translocation of tRNAs on improperly translocated ribosomes. Back-translocation proceeds from a post-translocation (POST) complex to a pre-translocation (PRE) complex, thus giving elongation factor G a second chance to translocate the tRNAs correctly. Binds to ribosomes in a GTP-dependent manner. In Methylorubrum populi (strain ATCC BAA-705 / NCIMB 13946 / BJ001) (Methylobacterium populi), this protein is Elongation factor 4.